A 793-amino-acid chain; its full sequence is Probable serine/threonine-protein kinase fnkA (793 aa).

One can recognise a Protein kinase domain in the interval 11–358 (WEILSQLGTG…IINLISHNFI (348 aa)). ATP-binding positions include 17 to 25 (LGTGAFGRV) and K46. The Proton acceptor role is filled by D138. 5 FNIP repeats span residues 403-444 (FNQT…FGAR), 470-514 (YNQP…ILGD), 515-557 (YDQK…LGYR), 558-601 (FNKA…LGYC), and 691-733 (FIRP…LGSR).

Belongs to the protein kinase superfamily. STE Ser/Thr protein kinase family. Requires Mg(2+) as cofactor.

It carries out the reaction L-seryl-[protein] + ATP = O-phospho-L-seryl-[protein] + ADP + H(+). It catalyses the reaction L-threonyl-[protein] + ATP = O-phospho-L-threonyl-[protein] + ADP + H(+). This chain is Probable serine/threonine-protein kinase fnkA, found in Dictyostelium discoideum (Social amoeba).